The chain runs to 243 residues: Probable 2-phosphosulfolactate phosphatase (243 aa).

The protein belongs to the ComB family. Mg(2+) is required as a cofactor.

The catalysed reaction is (2R)-O-phospho-3-sulfolactate + H2O = (2R)-3-sulfolactate + phosphate. The polypeptide is Probable 2-phosphosulfolactate phosphatase (Prochlorococcus marinus (strain MIT 9313)).